We begin with the raw amino-acid sequence, 610 residues long: Zinc metalloproteinase-disintegrin-like VAP1 (610 aa).

The signal sequence occupies residues 1 to 20 (MIQVLLVTISLAVFPYQGSS). Positions 21 to 189 (VILESGNVND…KKASQSNLTP (169 aa)) are excised as a propeptide. At glutamate 190 the chain carries Pyrrolidone carboxylic acid (Glu). Residues 199–395 (KYVKLFLVAD…NMPQCILKKP (197 aa)) enclose the Peptidase M12B domain. Asparagine 218 is a glycosylation site (N-linked (GlcNAc...) asparagine). Cystine bridges form between cysteine 310-cysteine 390, cysteine 350-cysteine 374, and cysteine 352-cysteine 357. Histidine 335 provides a ligand contact to Zn(2+). The Metal-binding signature appears at 335 to 346 (HEMGHNLGMDHD). Glutamate 336 serves as the catalytic Proton acceptor. Residues histidine 339 and histidine 345 each contribute to the Zn(2+) site. The 86-residue stretch at 403–488 (PAVCGNYFVE…AECTDRFQRN (86 aa)) folds into the Disintegrin domain. The Ca(2+) site is built by valine 405, asparagine 408, phenylalanine 410, glutamate 412, glutamate 415, and aspartate 418. Disulfide bonds link cysteine 406–cysteine 435, cysteine 417–cysteine 430, cysteine 419–cysteine 425, cysteine 429–cysteine 452, cysteine 443–cysteine 449, cysteine 448–cysteine 474, cysteine 461–cysteine 481, cysteine 468–cysteine 499, cysteine 492–cysteine 504, cysteine 511–cysteine 561, cysteine 526–cysteine 572, cysteine 539–cysteine 549, cysteine 556–cysteine 598, and cysteine 592–cysteine 603. The D/ECD-tripeptide motif lies at 467–469 (ECD). Positions 469, 470, 472, 483, and 484 each coordinate Ca(2+).

It belongs to the venom metalloproteinase (M12B) family. P-III subfamily. P-IIIc sub-subfamily. As to quaternary structure, homodimer; disulfide-linked. It depends on Zn(2+) as a cofactor. In terms of processing, the N-terminus is blocked. Expressed by the venom gland.

It is found in the secreted. Its activity is regulated as follows. Inhibited by EDTA and EGTA, but not by PMSF. Zinc metalloprotease that has fibrinogenolytic and hemorrhagic activities. It induces apoptosis in vascular endothelial cells (VEC), without degrading extracellular matrix (it cannot cleave collagen) or inhibiting adhesion of VEC. VAP1-induced apoptosis is inhibited by antibodies for integrin alpha-3, alpha-6, beta-1 and CD9. Apoptosis is accompanied by severe cell fragmentation, which is controlled by caspases. The polypeptide is Zinc metalloproteinase-disintegrin-like VAP1 (Crotalus atrox (Western diamondback rattlesnake)).